A 324-amino-acid chain; its full sequence is MGKRAVVTGVGHYLPSRVVPNSELETLVDTTDEWIRTRSGIERRHFAADGEQTSDLATAAAQAALDHAELTAQDVDAVIVATSTPDLTFPAVATMVQARLGMTRGFAYDVQAVCAGFVFAMANANAMILSGQADRILVIGAETFSRIMDWTDRSTCVLFGDGAGAVVLEARDGTGGTADRGILSADLNSDGRHRDILYVDGGVSSSQTAGYLRMEGKEVFRHAIEKLAATAETALAKAGLTEADVDWVVPHQANLRIITATARKMGIGMDRVVVTVADHGNTSAASIPMALSVGVARGQIKPGDLVVTEAIGGGLSWGSVVLRW.

Active-site residues include C114 and H251. Residues 252-256 (QANLR) form an ACP-binding region. The active site involves N281.

It belongs to the thiolase-like superfamily. FabH family. In terms of assembly, homodimer.

The protein resides in the cytoplasm. The enzyme catalyses malonyl-[ACP] + acetyl-CoA + H(+) = 3-oxobutanoyl-[ACP] + CO2 + CoA. Its pathway is lipid metabolism; fatty acid biosynthesis. Its function is as follows. Catalyzes the condensation reaction of fatty acid synthesis by the addition to an acyl acceptor of two carbons from malonyl-ACP. Catalyzes the first condensation reaction which initiates fatty acid synthesis and may therefore play a role in governing the total rate of fatty acid production. Possesses both acetoacetyl-ACP synthase and acetyl transacylase activities. Its substrate specificity determines the biosynthesis of branched-chain and/or straight-chain of fatty acids. In Dinoroseobacter shibae (strain DSM 16493 / NCIMB 14021 / DFL 12), this protein is Beta-ketoacyl-[acyl-carrier-protein] synthase III.